We begin with the raw amino-acid sequence, 354 residues long: Protein RecA (354 aa).

65-72 (GPESSGKT) lines the ATP pocket.

This sequence belongs to the RecA family.

Its subcellular location is the cytoplasm. In terms of biological role, can catalyze the hydrolysis of ATP in the presence of single-stranded DNA, the ATP-dependent uptake of single-stranded DNA by duplex DNA, and the ATP-dependent hybridization of homologous single-stranded DNAs. It interacts with LexA causing its activation and leading to its autocatalytic cleavage. The sequence is that of Protein RecA from Aeromonas hydrophila subsp. hydrophila (strain ATCC 7966 / DSM 30187 / BCRC 13018 / CCUG 14551 / JCM 1027 / KCTC 2358 / NCIMB 9240 / NCTC 8049).